A 626-amino-acid chain; its full sequence is (+)-3-carene synthase 1, chloroplastic (626 aa).

Residues 1 to 45 constitute a chloroplast transit peptide; sequence MSLISAVPLASSCVSKSLISSVREHTALRRAIATLQMSRRGKSVA. Residues Asp-377, Asp-381, and Asp-529 each contribute to the Mg(2+) site. Positions 377–381 match the DDXXD motif motif; the sequence is DDMYD.

Belongs to the terpene synthase family. Tpsd subfamily. Mg(2+) is required as a cofactor. The cofactor is Mn(2+).

It localises to the plastid. It is found in the chloroplast. The catalysed reaction is (2E)-geranyl diphosphate = (+)-car-3-ene + diphosphate. The enzyme catalyses (2E)-geranyl diphosphate = terpinolene + diphosphate. Its pathway is terpene metabolism; oleoresin biosynthesis. It participates in secondary metabolite biosynthesis; terpenoid biosynthesis. In terms of biological role, monoterpene synthase (TPS) involved in the biosynthesis of monoterpene natural products included in conifer oleoresin secretions and volatile emissions; these compounds contribute to biotic and abiotic stress defense against herbivores and pathogens. Catalyzes the conversion of (2E)-geranyl diphosphate (GPP) to (+)-car-3-ene and, to a lower extent, to terpinolene. This is (+)-3-carene synthase 1, chloroplastic from Pinus contorta (Shore pine).